We begin with the raw amino-acid sequence, 314 residues long: Melanoma-associated antigen 6 (314 aa).

Over residues 1–20 (MPLEQRSQHCKPEEGLEARG) the composition is skewed to basic and acidic residues. Residues 1–99 (MPLEQRSQHC…QEEEGPSTFP (99 aa)) are disordered. The span at 21–44 (EALGLVGAQAPATEEQEAASSSST) shows a compositional bias: low complexity. Polar residues predominate over residues 65–87 (PQGASSLPTTMNYPLWSQSYEDS). Positions 109-308 (LSRKVAKLVH…ISYPLLHEWA (200 aa)) constitute an MAGE domain.

Interacts with TRIM28. Ubiquitinated by the DCX(DCAF12) complex specifically recognizes the diglutamate (Glu-Glu) at the C-terminus, leading to its degradation. As to expression, expressed in many tumors of several types, such as melanoma, head and neck squamous cell carcinoma, lung carcinoma and breast carcinoma, but not in normal tissues except for testes.

Functionally, activator of ubiquitin ligase activity of RING-type zinc finger-containing E3 ubiquitin-protein ligases that acts as a repressor of autophagy. May enhance ubiquitin ligase activity of TRIM28 and stimulate p53/TP53 ubiquitination by TRIM28. Proposed to act through recruitment and/or stabilization of the Ubl-conjugating enzyme (E2) at the E3:substrate complex. May play a role in tumor transformation or aspects of tumor progression. In vitro promotes cell viability in melanoma cell lines. This is Melanoma-associated antigen 6 from Homo sapiens (Human).